A 222-amino-acid chain; its full sequence is 7-cyano-7-deazaguanine synthase (222 aa).

9–19 lines the ATP pocket; that stretch reads LSGGLDSATAA. Zn(2+) contacts are provided by Cys-190, Cys-198, Cys-201, and Cys-204.

It belongs to the QueC family. The cofactor is Zn(2+).

It carries out the reaction 7-carboxy-7-deazaguanine + NH4(+) + ATP = 7-cyano-7-deazaguanine + ADP + phosphate + H2O + H(+). It participates in purine metabolism; 7-cyano-7-deazaguanine biosynthesis. In terms of biological role, catalyzes the ATP-dependent conversion of 7-carboxy-7-deazaguanine (CDG) to 7-cyano-7-deazaguanine (preQ(0)). The protein is 7-cyano-7-deazaguanine synthase of Synechococcus sp. (strain RCC307).